Consider the following 344-residue polypeptide: Mitochondrial mRNA pseudouridine synthase RPUSD3 (344 aa).

A mitochondrion-targeting transit peptide spans 1 to 41 (MGGWRVLGQASGGWRRGLGIRATSTAAGFGTKARHQLQRRG). Residues 29–59 (FGTKARHQLQRRGASKPSDPPGDQPFPGLLR) form a disordered region. The segment covering 32–42 (KARHQLQRRGA) has biased composition (basic residues). Serine 64 bears the Phosphoserine mark.

This sequence belongs to the pseudouridine synthase RluA family. In terms of assembly, forms a regulatory protein-RNA complex, consisting of RCC1L, NGRN, RPUSD3, RPUSD4, TRUB2, FASTKD2 and 16S mt-rRNA.

Its subcellular location is the mitochondrion matrix. It carries out the reaction a uridine in mRNA = a pseudouridine in mRNA. Its function is as follows. Catalyzes uridine to pseudouridine isomerization (pseudouridylation) of specific mitochondrial mRNAs (mt-mRNAs), a post-transcriptional modification necessary for their translation. Acts at position 390 in COXI mt-mRNA and at position 697-699 in mitochondrial COXIII mt-mRNA. As a component of a functional protein-RNA module, consisting of RCC1L, NGRN, RPUSD3, RPUSD4, TRUB2, FASTKD2 and 16S mitochondrial ribosomal RNA (16S mt-rRNA), controls 16S mt-rRNA abundance and may play a role in mitochondrial ribosome biogenesis. The polypeptide is Mitochondrial mRNA pseudouridine synthase RPUSD3 (RPUSD3) (Bos taurus (Bovine)).